The primary structure comprises 901 residues: MRPVRGIARSRILSCSWRGTWTSALTILYLGVYCESTTVTPTTVEDTTVSNGNHSDASRNNTVIRNLTASVDFSQRKLYPYRICSMSMGTDLVRFARTIQCVPFNPRVNSEEGIMLIYKRNILPYVFTAYTYQKELLFQRSYKYVTYDYLLGYSREFVALPMWEIFLVNSRGQCYTSHQRVIGADRYIAYHNDNEVNETMWLMRDDMGNDDTYRYITVKEHARTPGSVWLYKETCSMNCIVTKTKGKSKFPYDMFVLPSGVIVNISPFYNGSNGKTFREQREKFHIWSNYSILKDFGSRALEARIVPKMAFYEREDVVIGWEVNDQSNVTCEMILWETVDRAIRTEYENAFHYVARTLTSTFVENKYSPDNNLTEDDIKCFKNDAQKKIEEVFLRDYNETYDMDGNATYHVTTGGLVIVWQGLKQKSLKALEIAANESAVSATGSNSRRKRSLPDESTGDISYAQLQFAYDTLRTYINQALGHIAEAWCLDQKRTAEVLHELSKINPSNILSAIFGVPVAARVVGDVISLAKCIEVNQSTVLIKGDMRKFSDDGKLEGCYSRPVVWFSMKNSTEVRLGQLGEDNEILLGTHRMETCQTQDYRIFVAGDIGYEFQQYVFTKKINLSEIDIIDTMIALKTEPLENIDFKVLELYSRDELAQANVFDLESIMREYNYQKKRLDFVVERVINPIPPALKGLDEMMNGMGAIGKGIGEAVGAVGGAIGSFIGALVTFVTNPFGAFVVFLFCVGCITLVITVYRRQRRAMQRPFDYFFPYASQTITSSVADSSIAVAYPGPEGTSGDAPPPYPGEAPYGYKDLSVDADTRVSSSSAGAGADFNEEDAVRMLRAIKRLDDKKRQEIEKSSKDSASNKNSETRRRPGIMDRLRRRGGYQKLNTEDDVHV.

Positions 1–34 (MRPVRGIARSRILSCSWRGTWTSALTILYLGVYC) are cleaved as a signal peptide. The Virion surface portion of the chain corresponds to 35 to 736 (ESTTVTPTTV…GALVTFVTNP (702 aa)). 3 N-linked (GlcNAc...) asparagine; by host glycosylation sites follow: Asn-53, Asn-60, and Asn-66. Intrachain disulfides connect Cys-84-Cys-533, Cys-101-Cys-489, Cys-174-Cys-239, and Cys-331-Cys-380. Residues 141 to 147 (SYKYVTY) are involved in fusion and/or binding to host membrane. N-linked (GlcNAc...) asparagine; by host glycosylation occurs at Asn-197. The involved in fusion and/or binding to host membrane stretch occupies residues 226–233 (GSVWLYKE). N-linked (GlcNAc...) asparagine; by host glycans are attached at residues Asn-270, Asn-289, Asn-328, Asn-372, Asn-398, Asn-406, Asn-436, Asn-537, Asn-571, and Asn-623. A disulfide bridge connects residues Cys-559 and Cys-596. Hydrophobic membrane proximal region stretches follow at residues 683-734 (VERV…TFVT) and 714-734 (AVGA…TFVT). The chain crosses the membrane as a helical span at residues 737 to 757 (FGAFVVFLFCVGCITLVITVY). Topologically, residues 758–901 (RRQRRAMQRP…KLNTEDDVHV (144 aa)) are intravirion. 2 disordered regions span residues 794-813 (GPEG…APYG) and 852-901 (DDKK…DVHV). 2 stretches are compositionally biased toward basic and acidic residues: residues 852–864 (DDKK…KSSK) and 872–883 (SETRRRPGIMDR). An Internalization motif motif is present at residues 890–893 (YQKL).

Belongs to the herpesviridae glycoprotein B family. As to quaternary structure, homotrimer; disulfide-linked. Binds to heparan sulfate proteoglycans. Interacts with gH/gL heterodimer. A proteolytic cleavage by host furin generates two subunits that remain linked by disulfide bonds.

It localises to the virion membrane. The protein resides in the host cell membrane. It is found in the host endosome membrane. The protein localises to the host Golgi apparatus membrane. In terms of biological role, envelope glycoprotein that forms spikes at the surface of virion envelope. Essential for the initial attachment to heparan sulfate moieties of the host cell surface proteoglycans. Involved in fusion of viral and cellular membranes leading to virus entry into the host cell. Following initial binding to its host receptors, membrane fusion is mediated by the fusion machinery composed at least of gB and the heterodimer gH/gL. May be involved in the fusion between the virion envelope and the outer nuclear membrane during virion egress. The protein is Envelope glycoprotein B of Guinea pig cytomegalovirus (strain 22122) (GPCMV).